Here is a 631-residue protein sequence, read N- to C-terminus: Chaperone protein HtpG (631 aa).

The segment at Met1–Arg342 is a; substrate-binding. A b region spans residues Glu343–Lys559. A c region spans residues Leu560–Lys631.

This sequence belongs to the heat shock protein 90 family. In terms of assembly, homodimer.

It is found in the cytoplasm. Molecular chaperone. Has ATPase activity. The chain is Chaperone protein HtpG from Aliivibrio fischeri (strain ATCC 700601 / ES114) (Vibrio fischeri).